We begin with the raw amino-acid sequence, 506 residues long: Protein nucleotidyltransferase YdiU (506 aa).

G95, G97, R98, K118, D130, G131, R181, and R188 together coordinate ATP. D257 serves as the catalytic Proton acceptor. 2 residues coordinate Mg(2+): N258 and D267. D267 serves as a coordination point for ATP. Residues K487–T506 form a disordered region.

This sequence belongs to the SELO family. The cofactor is Mg(2+). Requires Mn(2+) as cofactor.

It carries out the reaction L-seryl-[protein] + ATP = 3-O-(5'-adenylyl)-L-seryl-[protein] + diphosphate. The catalysed reaction is L-threonyl-[protein] + ATP = 3-O-(5'-adenylyl)-L-threonyl-[protein] + diphosphate. The enzyme catalyses L-tyrosyl-[protein] + ATP = O-(5'-adenylyl)-L-tyrosyl-[protein] + diphosphate. It catalyses the reaction L-histidyl-[protein] + UTP = N(tele)-(5'-uridylyl)-L-histidyl-[protein] + diphosphate. It carries out the reaction L-seryl-[protein] + UTP = O-(5'-uridylyl)-L-seryl-[protein] + diphosphate. The catalysed reaction is L-tyrosyl-[protein] + UTP = O-(5'-uridylyl)-L-tyrosyl-[protein] + diphosphate. Nucleotidyltransferase involved in the post-translational modification of proteins. It can catalyze the addition of adenosine monophosphate (AMP) or uridine monophosphate (UMP) to a protein, resulting in modifications known as AMPylation and UMPylation. This chain is Protein nucleotidyltransferase YdiU, found in Shewanella denitrificans (strain OS217 / ATCC BAA-1090 / DSM 15013).